A 227-amino-acid polypeptide reads, in one-letter code: PKHD-type hydroxylase Bpro_3048 (227 aa).

One can recognise a Fe2OG dioxygenase domain in the interval 78-179 (KIFTPRINRY…RLACFFWVES (102 aa)). Positions 97, 99, and 160 each coordinate Fe cation. A 2-oxoglutarate-binding site is contributed by Arg-170.

Requires Fe(2+) as cofactor. It depends on L-ascorbate as a cofactor.

This chain is PKHD-type hydroxylase Bpro_3048, found in Polaromonas sp. (strain JS666 / ATCC BAA-500).